The following is a 434-amino-acid chain: Adenylosuccinate synthetase (434 aa).

GTP is bound by residues 15–21 and 43–45; these read GDEGKGK and GHT. The Proton acceptor role is filled by aspartate 16. 2 residues coordinate Mg(2+): aspartate 16 and glycine 43. IMP contacts are provided by residues 16 to 19, 41 to 44, threonine 133, arginine 147, glutamine 228, threonine 243, and arginine 307; these read DEGK and NAGH. Histidine 44 (proton donor) is an active-site residue. A substrate-binding site is contributed by 303 to 309; sequence SVTGRAR. GTP-binding positions include arginine 309, 335–337, and 418–420; these read KLD and STG.

This sequence belongs to the adenylosuccinate synthetase family. As to quaternary structure, homodimer. Requires Mg(2+) as cofactor.

The protein localises to the cytoplasm. It carries out the reaction IMP + L-aspartate + GTP = N(6)-(1,2-dicarboxyethyl)-AMP + GDP + phosphate + 2 H(+). It functions in the pathway purine metabolism; AMP biosynthesis via de novo pathway; AMP from IMP: step 1/2. Plays an important role in the de novo pathway of purine nucleotide biosynthesis. Catalyzes the first committed step in the biosynthesis of AMP from IMP. The chain is Adenylosuccinate synthetase from Neisseria meningitidis serogroup C / serotype 2a (strain ATCC 700532 / DSM 15464 / FAM18).